The chain runs to 96 residues: Co-chaperonin GroES (96 aa).

It belongs to the GroES chaperonin family. In terms of assembly, heptamer of 7 subunits arranged in a ring. Interacts with the chaperonin GroEL.

Its subcellular location is the cytoplasm. Together with the chaperonin GroEL, plays an essential role in assisting protein folding. The GroEL-GroES system forms a nano-cage that allows encapsulation of the non-native substrate proteins and provides a physical environment optimized to promote and accelerate protein folding. GroES binds to the apical surface of the GroEL ring, thereby capping the opening of the GroEL channel. In Neisseria meningitidis serogroup A / serotype 4A (strain DSM 15465 / Z2491), this protein is Co-chaperonin GroES.